A 541-amino-acid chain; its full sequence is Protein wntless homolog (541 aa).

Residues 1–15 (MAGAIIENMGTKKLC) are Cytoplasmic-facing. Residues 16–36 (IVGGILLVFQIIAFLVGGLIA) traverse the membrane as a helical segment. The Lumenal portion of the chain corresponds to 37–232 (PGPTTAVSYM…GIHQNGGFTK (196 aa)). Positions 101–232 (MEMSPWFQFM…GIHQNGGFTK (132 aa)) are interaction with Wnt proteins. The chain crosses the membrane as a helical span at residues 233–253 (VWFAMKTFLTPSIFIIMVWYW). The Cytoplasmic segment spans residues 254–268 (RRITMMSRPPVLLEK). Residues 269 to 289 (VIFALGISMTFINIPVEWFSI) traverse the membrane as a helical segment. Over 290 to 303 (GFDWTWMLLFGDIR) the chain is Lumenal. A helical membrane pass occupies residues 304 to 324 (QGIFYAMLLSFWIIFCGEHMM). The Cytoplasmic segment spans residues 325 to 331 (DQHERNH). The chain crosses the membrane as a helical span at residues 332–352 (IAGYWKQVGPIAVGSFCLFIF). The Lumenal portion of the chain corresponds to 353–380 (DMCERGVQLTNPFYSIWTTDIGTELAMA). Residues 381–401 (FIIVAGICLCLYFLFLCFMVF) traverse the membrane as a helical segment. Residues 402–431 (QVFRNISGKQSSLPAMSKVRRLHYEGLIFR) are Cytoplasmic-facing. Residues 432 to 452 (FKFLMLITLACAAMTVIFFIV) form a helical membrane-spanning segment. At 453 to 471 (SQVTEGHWKWGGVTVQVNS) the chain is on the lumenal side. The helical transmembrane segment at 472-492 (AFFTGIYGMWNLYVFALMFLY) threads the bilayer. Over 493–541 (APSHKNYGEDQSNGDLGVHSGEELQLTTTITHVDGPTEIYKLTRKEAQE) the chain is Cytoplasmic.

The protein belongs to the wntless family. Interacts with WNT3A. Interacts with WNT1, WNT3 and WNT5A.

The protein resides in the golgi apparatus membrane. Its subcellular location is the cytoplasmic vesicle membrane. It localises to the cell membrane. It is found in the endoplasmic reticulum membrane. The protein localises to the early endosome membrane. Regulates Wnt proteins sorting and secretion in a feedback regulatory mechanism. This reciprocal interaction plays a key role in the regulation of expression, subcellular location, binding and organelle-specific association of Wnt proteins. Also plays an important role in establishment of the anterior-posterior body axis formation during development. The chain is Protein wntless homolog (WLS) from Pongo abelii (Sumatran orangutan).